A 335-amino-acid polypeptide reads, in one-letter code: tRNA N6-adenosine threonylcarbamoyltransferase (335 aa).

Fe cation-binding residues include His-110 and His-114. Residues 132–136 (LVSGG), Asp-165, Gly-178, and Asn-271 each bind substrate. A Fe cation-binding site is contributed by Asp-299.

The protein belongs to the KAE1 / TsaD family. Fe(2+) serves as cofactor.

It localises to the cytoplasm. It catalyses the reaction L-threonylcarbamoyladenylate + adenosine(37) in tRNA = N(6)-L-threonylcarbamoyladenosine(37) in tRNA + AMP + H(+). Its function is as follows. Required for the formation of a threonylcarbamoyl group on adenosine at position 37 (t(6)A37) in tRNAs that read codons beginning with adenine. Is involved in the transfer of the threonylcarbamoyl moiety of threonylcarbamoyl-AMP (TC-AMP) to the N6 group of A37, together with TsaE and TsaB. TsaD likely plays a direct catalytic role in this reaction. This Campylobacter jejuni subsp. doylei (strain ATCC BAA-1458 / RM4099 / 269.97) protein is tRNA N6-adenosine threonylcarbamoyltransferase.